A 453-amino-acid chain; its full sequence is Bifunctional protein GlmU (453 aa).

The interval 1–225 is pyrophosphorylase; it reads MNIVILAAGT…EWETLGVNSK (225 aa). UDP-N-acetyl-alpha-D-glucosamine-binding positions include 6 to 9, K20, Q71, 76 to 77, 98 to 100, G135, E150, N165, and N223; these read LAAG, GT, and YGD. Position 100 (D100) interacts with Mg(2+). N223 lines the Mg(2+) pocket. Residues 226–246 are linker; it reads AQLAELERIHQRNVADALLVD. The segment at 247–453 is N-acetyltransferase; that stretch reads GVTLADPARV…GYVRPVKKKS (207 aa). Residues R329 and K347 each coordinate UDP-N-acetyl-alpha-D-glucosamine. H359 (proton acceptor) is an active-site residue. UDP-N-acetyl-alpha-D-glucosamine contacts are provided by Y362 and N373. Acetyl-CoA is bound by residues A376, 382 to 383, S401, and A419; that span reads NY.

In the N-terminal section; belongs to the N-acetylglucosamine-1-phosphate uridyltransferase family. This sequence in the C-terminal section; belongs to the transferase hexapeptide repeat family. In terms of assembly, homotrimer. It depends on Mg(2+) as a cofactor.

The protein localises to the cytoplasm. The catalysed reaction is alpha-D-glucosamine 1-phosphate + acetyl-CoA = N-acetyl-alpha-D-glucosamine 1-phosphate + CoA + H(+). It catalyses the reaction N-acetyl-alpha-D-glucosamine 1-phosphate + UTP + H(+) = UDP-N-acetyl-alpha-D-glucosamine + diphosphate. It participates in nucleotide-sugar biosynthesis; UDP-N-acetyl-alpha-D-glucosamine biosynthesis; N-acetyl-alpha-D-glucosamine 1-phosphate from alpha-D-glucosamine 6-phosphate (route II): step 2/2. Its pathway is nucleotide-sugar biosynthesis; UDP-N-acetyl-alpha-D-glucosamine biosynthesis; UDP-N-acetyl-alpha-D-glucosamine from N-acetyl-alpha-D-glucosamine 1-phosphate: step 1/1. It functions in the pathway bacterial outer membrane biogenesis; LPS lipid A biosynthesis. In terms of biological role, catalyzes the last two sequential reactions in the de novo biosynthetic pathway for UDP-N-acetylglucosamine (UDP-GlcNAc). The C-terminal domain catalyzes the transfer of acetyl group from acetyl coenzyme A to glucosamine-1-phosphate (GlcN-1-P) to produce N-acetylglucosamine-1-phosphate (GlcNAc-1-P), which is converted into UDP-GlcNAc by the transfer of uridine 5-monophosphate (from uridine 5-triphosphate), a reaction catalyzed by the N-terminal domain. This is Bifunctional protein GlmU from Burkholderia orbicola (strain AU 1054).